The following is a 781-amino-acid chain: Penicillin-binding protein 1B (781 aa).

The transglycosylase stretch occupies residues 151–322 (FRLAPKLIAM…SLYNPWRNPQ (172 aa)). E188 serves as the catalytic Proton donor; for transglycosylase activity. The tract at residues 415–702 (SQLQLKMKNP…ALQIYKDYLN (288 aa)) is transpeptidase. S466 acts as the Acyl-ester intermediate; for transpeptidase activity in catalysis. Low complexity predominate over residues 749-768 (ETSSPSLTPTTETETPPQES). Residues 749–781 (ETSSPSLTPTTETETPPQESLWDVLDNPNPPAQ) are disordered.

It in the N-terminal section; belongs to the glycosyltransferase 51 family. The protein in the C-terminal section; belongs to the transpeptidase family.

Its subcellular location is the cell inner membrane. It carries out the reaction [GlcNAc-(1-&gt;4)-Mur2Ac(oyl-L-Ala-gamma-D-Glu-L-Lys-D-Ala-D-Ala)](n)-di-trans,octa-cis-undecaprenyl diphosphate + beta-D-GlcNAc-(1-&gt;4)-Mur2Ac(oyl-L-Ala-gamma-D-Glu-L-Lys-D-Ala-D-Ala)-di-trans,octa-cis-undecaprenyl diphosphate = [GlcNAc-(1-&gt;4)-Mur2Ac(oyl-L-Ala-gamma-D-Glu-L-Lys-D-Ala-D-Ala)](n+1)-di-trans,octa-cis-undecaprenyl diphosphate + di-trans,octa-cis-undecaprenyl diphosphate + H(+). The catalysed reaction is Preferential cleavage: (Ac)2-L-Lys-D-Ala-|-D-Ala. Also transpeptidation of peptidyl-alanyl moieties that are N-acyl substituents of D-alanine.. Its pathway is cell wall biogenesis; peptidoglycan biosynthesis. Its function is as follows. Cell wall formation. Synthesis of cross-linked peptidoglycan from the lipid intermediates. The enzyme has a penicillin-insensitive transglycosylase N-terminal domain (formation of linear glycan strands) and a penicillin-sensitive transpeptidase C-terminal domain (cross-linking of the peptide subunits). The polypeptide is Penicillin-binding protein 1B (mrcB) (Haemophilus influenzae (strain ATCC 51907 / DSM 11121 / KW20 / Rd)).